A 192-amino-acid polypeptide reads, in one-letter code: Ion-translocating oxidoreductase complex subunit A (192 aa).

6 helical membrane passes run 5–25, 39–59, 72–92, 102–122, 134–154, and 171–191; these read LLLL…FLGL, IGMS…SFLV, LRTM…EMLV, ALGI…VALL, AIYG…FSAM, and AIAM…TGLV.

Belongs to the NqrDE/RnfAE family. As to quaternary structure, the complex is composed of six subunits: RnfA, RnfB, RnfC, RnfD, RnfE and RnfG.

It localises to the cell inner membrane. In terms of biological role, part of a membrane-bound complex that couples electron transfer with translocation of ions across the membrane. This is Ion-translocating oxidoreductase complex subunit A from Shewanella amazonensis (strain ATCC BAA-1098 / SB2B).